Here is a 473-residue protein sequence, read N- to C-terminus: Cell division protein FtsP (473 aa).

A signal peptide (tat-type signal) is located at residues methionine 1–alanine 27.

The protein belongs to the FtsP family. Post-translationally, predicted to be exported by the Tat system. The position of the signal peptide cleavage has not been experimentally proven.

The protein localises to the periplasm. In terms of biological role, cell division protein that is required for growth during stress conditions. May be involved in protecting or stabilizing the divisomal assembly under conditions of stress. The chain is Cell division protein FtsP from Photorhabdus laumondii subsp. laumondii (strain DSM 15139 / CIP 105565 / TT01) (Photorhabdus luminescens subsp. laumondii).